The primary structure comprises 505 residues: Succinyl-CoA:acetate CoA-transferase (505 aa).

Residue 269–273 participates in CoA binding; the sequence is GVGNV. The active-site 5-glutamyl coenzyme A thioester intermediate is Glu294. Positions 364, 384, 388, and 408 each coordinate CoA.

Belongs to the acetyl-CoA hydrolase/transferase family. Homodimer.

It catalyses the reaction succinyl-CoA + acetate = succinate + acetyl-CoA. The protein operates within metabolic intermediate biosynthesis; acetyl-CoA biosynthesis. With respect to regulation, subject to competitive inhibition by coenzyme A (CoA). Its function is as follows. Utilizes succinyl-CoA to convert toxic acetate to acetyl-CoA and succinate. Required for growth on acetic acid and for resistance to high levels of acetic acid. Also has low activity with acetoacetate as substrate. This is Succinyl-CoA:acetate CoA-transferase from Acetobacter aceti.